The following is a 131-amino-acid chain: Small ribosomal subunit protein bS6 (131 aa).

Residues 96–131 (VTEASPMAKAKDERDSRRGPAGDRSYDEANAEEIAE) form a disordered region. Residues 104–122 (KAKDERDSRRGPAGDRSYD) show a composition bias toward basic and acidic residues.

Belongs to the bacterial ribosomal protein bS6 family.

Binds together with bS18 to 16S ribosomal RNA. This is Small ribosomal subunit protein bS6 from Shewanella sp. (strain ANA-3).